Consider the following 318-residue polypeptide: 2-keto-3-deoxygluconate permease (318 aa).

Transmembrane regions (helical) follow at residues 10-30, 42-62, 82-102, 109-129, 139-159, 163-183, 201-221, 224-244, 257-277, and 288-308; these read LPGG…TLWP, GLIS…GATI, IAVA…GGIP, LSVL…YAAL, AGAV…LILG, LATF…LGFA, TLVP…TIVH, ASGV…LLLA, VAAS…AGMA, and TALV…LTAL.

Belongs to the KdgT transporter family.

It localises to the cell inner membrane. It carries out the reaction 2-dehydro-3-deoxy-D-gluconate(in) + H(+)(in) = 2-dehydro-3-deoxy-D-gluconate(out) + H(+)(out). In terms of biological role, catalyzes the proton-dependent uptake of 2-keto-3-deoxygluconate (KDG) into the cell. This chain is 2-keto-3-deoxygluconate permease, found in Xanthomonas oryzae pv. oryzae (strain MAFF 311018).